A 160-amino-acid chain; its full sequence is Eukaryotic translation initiation factor 5A (160 aa).

The segment covering 1-10 (MSDDDHHFES) has biased composition (basic and acidic residues). The disordered stretch occupies residues 1 to 23 (MSDDDHHFESSADAGASKTYPQQ). Position 52 is a hypusine (Lys-52).

The protein belongs to the eIF-5A family. Post-translationally, lys-52 undergoes hypusination, a unique post-translational modification that consists in the addition of a butylamino group from spermidine to lysine side chain, leading to the formation of the unusual amino acid hypusine. eIF-5As are the only known proteins to undergo this modification, which is essential for their function.

Functionally, translation factor that promotes translation elongation and termination, particularly upon ribosome stalling at specific amino acid sequence contexts. Binds between the exit (E) and peptidyl (P) site of the ribosome and promotes rescue of stalled ribosome: specifically required for efficient translation of polyproline-containing peptides as well as other motifs that stall the ribosome. Acts as a ribosome quality control (RQC) cofactor by joining the RQC complex to facilitate peptidyl transfer during CAT tailing step. The chain is Eukaryotic translation initiation factor 5A from Dianthus caryophyllus (Carnation).